Here is a 96-residue protein sequence, read N- to C-terminus: Aspartyl/glutamyl-tRNA(Asn/Gln) amidotransferase subunit C (96 aa).

This sequence belongs to the GatC family. As to quaternary structure, heterotrimer of A, B and C subunits.

It catalyses the reaction L-glutamyl-tRNA(Gln) + L-glutamine + ATP + H2O = L-glutaminyl-tRNA(Gln) + L-glutamate + ADP + phosphate + H(+). The enzyme catalyses L-aspartyl-tRNA(Asn) + L-glutamine + ATP + H2O = L-asparaginyl-tRNA(Asn) + L-glutamate + ADP + phosphate + 2 H(+). Functionally, allows the formation of correctly charged Asn-tRNA(Asn) or Gln-tRNA(Gln) through the transamidation of misacylated Asp-tRNA(Asn) or Glu-tRNA(Gln) in organisms which lack either or both of asparaginyl-tRNA or glutaminyl-tRNA synthetases. The reaction takes place in the presence of glutamine and ATP through an activated phospho-Asp-tRNA(Asn) or phospho-Glu-tRNA(Gln). The chain is Aspartyl/glutamyl-tRNA(Asn/Gln) amidotransferase subunit C from Chloroflexus aurantiacus (strain ATCC 29366 / DSM 635 / J-10-fl).